The chain runs to 249 residues: Triosephosphate isomerase (249 aa).

Substrate contacts are provided by asparagine 10 and lysine 12. Histidine 94 functions as the Electrophile in the catalytic mechanism. The active-site Proton acceptor is the glutamate 166.

Belongs to the triosephosphate isomerase family. As to quaternary structure, homodimer. The N-terminus is blocked.

It carries out the reaction D-glyceraldehyde 3-phosphate = dihydroxyacetone phosphate. Its pathway is carbohydrate biosynthesis; gluconeogenesis. It functions in the pathway carbohydrate degradation; glycolysis; D-glyceraldehyde 3-phosphate from glycerone phosphate: step 1/1. The chain is Triosephosphate isomerase (TPI1) from Paracoccidioides lutzii (strain ATCC MYA-826 / Pb01) (Paracoccidioides brasiliensis).